The primary structure comprises 83 residues: BmKBT-like peptide (83 aa).

Positions 1 to 19 are cleaved as a signal peptide; that stretch reads MKAALLLVISTLMLIGVLT. The LCN-type CS-alpha/beta domain occupies 21–81; sequence KSGYPIQHDG…TWSRETNKCR (61 aa). 4 cysteine pairs are disulfide-bonded: Cys-31–Cys-80, Cys-35–Cys-54, Cys-41–Cys-61, and Cys-45–Cys-63. Lys-83 is a propeptide (removed by a carboxypeptidase).

It belongs to the long (4 C-C) scorpion toxin superfamily. Sodium channel inhibitor family. Beta subfamily. In terms of tissue distribution, expressed by the venom gland.

The protein resides in the secreted. Its function is as follows. Sodium channel inhibitor. Possesses potent toxicity in mice but induces only paralysis in cotton bollworm. The polypeptide is BmKBT-like peptide (Olivierus martensii (Manchurian scorpion)).